A 279-amino-acid chain; its full sequence is Pleckstrin homology domain-containing family F member 1 (279 aa).

The PH domain occupies 35-131; that stretch reads VLLGEGVLTK…WISHIEECVR (97 aa). The segment at 152 to 212 adopts an FYVE-type zinc-finger fold; that stretch reads DKATDICMRC…VCSLCYRELA (61 aa). Residues cysteine 158, cysteine 161, cysteine 175, cysteine 178, cysteine 183, cysteine 186, cysteine 204, and cysteine 207 each contribute to the Zn(2+) site. Residues 220–263 form a disordered region; sequence AREGIGGSPPQLSHLGGTVCGASSGDDDDSDEDREGNGDGDWPT. Residues 244-253 show a composition bias toward acidic residues; the sequence is GDDDDSDEDR.

As to expression, widely expressed.

The protein localises to the nucleus. It localises to the cytoplasm. It is found in the perinuclear region. Its subcellular location is the lysosome. May induce apoptosis through the lysosomal-mitochondrial pathway. Translocates to the lysosome initiating the permeabilization of lysosomal membrane (LMP) and resulting in the release of CTSD and CTSL to the cytoplasm. Triggers the caspase-independent apoptosis by altering mitochondrial membrane permeabilization (MMP) resulting in the release of PDCD8. This Mus musculus (Mouse) protein is Pleckstrin homology domain-containing family F member 1 (Plekhf1).